The chain runs to 557 residues: Glypican-4 (557 aa).

The first 18 residues, Met-1–Ala-18, serve as a signal peptide directing secretion. Position 357 is a phosphoserine (Ser-357). 3 O-linked (Xyl...) (glycosaminoglycan) serine glycosylation sites follow: Ser-494, Ser-498, and Ser-500. N-linked (GlcNAc...) asparagine glycosylation is present at Asn-514. Ser-529 is lipidated: GPI-anchor amidated serine. A propeptide spans Ala-530–Arg-557 (removed in mature form).

Belongs to the glypican family. As to expression, highly expressed in developing brain and kidney.

It is found in the cell membrane. The protein localises to the secreted. It localises to the extracellular space. Cell surface proteoglycan that bears heparan sulfate. May be involved in the development of kidney tubules and of the central nervous system. The polypeptide is Glypican-4 (Gpc4) (Mus musculus (Mouse)).